Reading from the N-terminus, the 433-residue chain is Energy-coupling factor transporter ATP-binding protein EcfA2 (433 aa).

The ABC transporter domain occupies Val-25 to Gln-389. Gly-62–Ser-69 contributes to the ATP binding site.

The protein belongs to the ABC transporter superfamily. Energy-coupling factor EcfA family. As to quaternary structure, forms a stable energy-coupling factor (ECF) transporter complex composed of 2 membrane-embedded substrate-binding proteins (S component), 2 ATP-binding proteins (A component) and 2 transmembrane proteins (T component).

Its subcellular location is the cell membrane. Functionally, ATP-binding (A) component of a common energy-coupling factor (ECF) ABC-transporter complex. Unlike classic ABC transporters this ECF transporter provides the energy necessary to transport a number of different substrates. In Ureaplasma parvum serovar 3 (strain ATCC 700970), this protein is Energy-coupling factor transporter ATP-binding protein EcfA2.